Here is a 559-residue protein sequence, read N- to C-terminus: Dihydroxy-acid dehydratase (559 aa).

A [2Fe-2S] cluster-binding site is contributed by Cys52. Asp84 contacts Mg(2+). A [2Fe-2S] cluster-binding site is contributed by Cys125. Mg(2+)-binding residues include Asp126 and Lys127. Lys127 bears the N6-carboxylysine mark. Residue Cys197 coordinates [2Fe-2S] cluster. Glu447 contacts Mg(2+). Residue Ser473 is the Proton acceptor of the active site.

This sequence belongs to the IlvD/Edd family. Homodimer. [2Fe-2S] cluster is required as a cofactor. Mg(2+) serves as cofactor.

The catalysed reaction is (2R)-2,3-dihydroxy-3-methylbutanoate = 3-methyl-2-oxobutanoate + H2O. It catalyses the reaction (2R,3R)-2,3-dihydroxy-3-methylpentanoate = (S)-3-methyl-2-oxopentanoate + H2O. Its pathway is amino-acid biosynthesis; L-isoleucine biosynthesis; L-isoleucine from 2-oxobutanoate: step 3/4. The protein operates within amino-acid biosynthesis; L-valine biosynthesis; L-valine from pyruvate: step 3/4. Its function is as follows. Functions in the biosynthesis of branched-chain amino acids. Catalyzes the dehydration of (2R,3R)-2,3-dihydroxy-3-methylpentanoate (2,3-dihydroxy-3-methylvalerate) into 2-oxo-3-methylpentanoate (2-oxo-3-methylvalerate) and of (2R)-2,3-dihydroxy-3-methylbutanoate (2,3-dihydroxyisovalerate) into 2-oxo-3-methylbutanoate (2-oxoisovalerate), the penultimate precursor to L-isoleucine and L-valine, respectively. This is Dihydroxy-acid dehydratase from Roseiflexus castenholzii (strain DSM 13941 / HLO8).